The sequence spans 481 residues: UDP-glycosyltransferase 85C2 (481 aa).

Histidine 23 acts as the Proton acceptor in catalysis. Histidine 23 contributes to the an anthocyanidin binding site. The active-site Charge relay is aspartate 120. UDP-alpha-D-glucose-binding residues include threonine 143, glutamine 362, histidine 377, tryptophan 380, serine 382, glutamate 385, aspartate 401, and glutamine 402.

It belongs to the UDP-glycosyltransferase family.

The catalysed reaction is steviol + UDP-alpha-D-glucose = steviolmonoside + UDP + H(+). It carries out the reaction steviolmonoside + UDP-alpha-D-glucose = rubusoside + UDP. Its function is as follows. Involved in the biosynthesis of steviol glycosides in leaves. Converts steviol to the mono-glycoside steviolmonoside. Converts the mono-glycoside steviolmonoside to the bi-glycoside rubusoside. This Stevia rebaudiana (Stevia) protein is UDP-glycosyltransferase 85C2.